Consider the following 447-residue polypeptide: ATP-dependent protease ATPase subunit HslU (447 aa).

ATP is bound by residues Ile17, 59-64 (GVGKTE), Asp256, Glu321, and Arg393.

It belongs to the ClpX chaperone family. HslU subfamily. In terms of assembly, a double ring-shaped homohexamer of HslV is capped on each side by a ring-shaped HslU homohexamer. The assembly of the HslU/HslV complex is dependent on binding of ATP.

The protein resides in the cytoplasm. In terms of biological role, ATPase subunit of a proteasome-like degradation complex; this subunit has chaperone activity. The binding of ATP and its subsequent hydrolysis by HslU are essential for unfolding of protein substrates subsequently hydrolyzed by HslV. HslU recognizes the N-terminal part of its protein substrates and unfolds these before they are guided to HslV for hydrolysis. This is ATP-dependent protease ATPase subunit HslU from Pseudomonas entomophila (strain L48).